The primary structure comprises 199 residues: N-(5'-phosphoribosyl)anthranilate isomerase (199 aa).

The protein belongs to the TrpF family.

The enzyme catalyses N-(5-phospho-beta-D-ribosyl)anthranilate = 1-(2-carboxyphenylamino)-1-deoxy-D-ribulose 5-phosphate. It participates in amino-acid biosynthesis; L-tryptophan biosynthesis; L-tryptophan from chorismate: step 3/5. The sequence is that of N-(5'-phosphoribosyl)anthranilate isomerase from Streptococcus pneumoniae (strain Hungary19A-6).